A 548-amino-acid chain; its full sequence is Formyltransferase/hydrolase complex Fhc subunit A (548 aa).

3 residues coordinate Zn(2+): H57, H59, and H227.

It belongs to the metallo-dependent hydrolases superfamily. FwdA/FmdA family. Octaheteromer. Part of the formyltransferase/hydrolase complex fhc; composed of FhcA, FhcB, FhcC and FhcD. The cofactor is Zn(2+).

The protein localises to the cytoplasm. It carries out the reaction N-formylmethanofuran + H2O = methanofuran + formate. Its pathway is one-carbon metabolism; formaldehyde degradation; formate from formaldehyde (H(4)MPT route): step 4/5. In terms of biological role, involved in the transformation of 5-formyl tetrahydromethanopterin (5-formyl-H(4)MPT) to methanofuran (MFR) and formate via the formylmethanofuran (formyl-MFR). May be catalyze the hydrolysis of formylmethanofuran (formyl-MFR) to yield formate and MFR. In Methylorubrum extorquens (strain ATCC 14718 / DSM 1338 / JCM 2805 / NCIMB 9133 / AM1) (Methylobacterium extorquens), this protein is Formyltransferase/hydrolase complex Fhc subunit A (fhcA).